Reading from the N-terminus, the 335-residue chain is Fructose-1,6-bisphosphatase class 1 (335 aa).

Mg(2+) is bound by residues glutamate 94, aspartate 113, leucine 115, and aspartate 116. Residues 116-119 (DGSS), asparagine 208, and lysine 274 contribute to the substrate site. Glutamate 280 is a Mg(2+) binding site.

This sequence belongs to the FBPase class 1 family. Homotetramer. Requires Mg(2+) as cofactor.

The protein localises to the cytoplasm. The catalysed reaction is beta-D-fructose 1,6-bisphosphate + H2O = beta-D-fructose 6-phosphate + phosphate. The protein operates within carbohydrate biosynthesis; gluconeogenesis. The chain is Fructose-1,6-bisphosphatase class 1 from Polynucleobacter asymbioticus (strain DSM 18221 / CIP 109841 / QLW-P1DMWA-1) (Polynucleobacter necessarius subsp. asymbioticus).